The primary structure comprises 214 residues: Adenylate kinase (214 aa).

10–15 (GAGKGT) lines the ATP pocket. The tract at residues 30 to 59 (STGDMLRAAVKAGSELGLKAKEIMDAGKLV) is NMP. Residues T31, R36, 57–59 (KLV), 85–88 (GFPR), and Q92 each bind AMP. The interval 122–159 (GRRVHAPSGRVYHVTFNPPRVEGKDDMTGEELTTRKDD) is LID. ATP-binding positions include R123 and 132–133 (VY). Positions 156 and 167 each coordinate AMP. R200 is an ATP binding site.

This sequence belongs to the adenylate kinase family. Monomer.

Its subcellular location is the cytoplasm. It carries out the reaction AMP + ATP = 2 ADP. Its pathway is purine metabolism; AMP biosynthesis via salvage pathway; AMP from ADP: step 1/1. Its function is as follows. Catalyzes the reversible transfer of the terminal phosphate group between ATP and AMP. Plays an important role in cellular energy homeostasis and in adenine nucleotide metabolism. This Erwinia tasmaniensis (strain DSM 17950 / CFBP 7177 / CIP 109463 / NCPPB 4357 / Et1/99) protein is Adenylate kinase.